Consider the following 270-residue polypeptide: Formamidopyrimidine-DNA glycosylase (270 aa).

The active-site Schiff-base intermediate with DNA is Pro2. The Proton donor role is filled by Glu3. The active-site Proton donor; for beta-elimination activity is the Lys58. 3 residues coordinate DNA: His91, Arg110, and Lys151. An FPG-type zinc finger spans residues 236 to 270 (LVYGKAGAPCTECNTPLKEIRMNNRSTVYCPRCQR). Arg260 (proton donor; for delta-elimination activity) is an active-site residue.

This sequence belongs to the FPG family. As to quaternary structure, monomer. Requires Zn(2+) as cofactor.

It carries out the reaction Hydrolysis of DNA containing ring-opened 7-methylguanine residues, releasing 2,6-diamino-4-hydroxy-5-(N-methyl)formamidopyrimidine.. The catalysed reaction is 2'-deoxyribonucleotide-(2'-deoxyribose 5'-phosphate)-2'-deoxyribonucleotide-DNA = a 3'-end 2'-deoxyribonucleotide-(2,3-dehydro-2,3-deoxyribose 5'-phosphate)-DNA + a 5'-end 5'-phospho-2'-deoxyribonucleoside-DNA + H(+). Functionally, involved in base excision repair of DNA damaged by oxidation or by mutagenic agents. Acts as a DNA glycosylase that recognizes and removes damaged bases. Has a preference for oxidized purines, such as 7,8-dihydro-8-oxoguanine (8-oxoG). Has AP (apurinic/apyrimidinic) lyase activity and introduces nicks in the DNA strand. Cleaves the DNA backbone by beta-delta elimination to generate a single-strand break at the site of the removed base with both 3'- and 5'-phosphates. This chain is Formamidopyrimidine-DNA glycosylase, found in Marinobacter nauticus (strain ATCC 700491 / DSM 11845 / VT8) (Marinobacter aquaeolei).